A 1052-amino-acid chain; its full sequence is F-box/WD repeat-containing protein 10 (1052 aa).

Residues 169 to 206 form a WD 1 repeat; sequence GLNQDITDVCFSPEKDHSSKSATSQVYWTAKTQHTSLP. Residues 276-323 enclose the F-box domain; it reads DFIRYLPIHLSKYILRMLDRHTLNKCASVSQHWAAMAQQVKMDLSAHG. WD repeat units lie at residues 409–447, 451–490, 493–532, 534–569, 572–609, and 611–652; these read SDTW…AIPV, GHAG…CTRI, GHQG…KTFR, KDPI…LVKT, GHEG…ERCL, and AFKH…KVLK. The stretch at 690–719 forms a coiled coil; the sequence is YAVEKTKQKKNKEKEEEKEENSLMEILSKC. Residues 766 to 805 are disordered; it reads LQSQGKSKSPRRDADDVEKAQKQGQLETPGKLPSHPKKKS. The segment covering 775–786 has biased composition (basic and acidic residues); the sequence is PRRDADDVEKAQ. Residues 986–1010 are a coiled coil; that stretch reads VLLTVKEEKEHQEAKMKEYQAREST.

Probable substrate-recognition component of a SCF (SKP1-CUL1-F-box protein)-type E3 ubiquitin ligase complex which mediates the ubiquitination and subsequent proteasomal degradation of target proteins. Overexpression is leading to degradation of CBX5 and CBX1. The sequence is that of F-box/WD repeat-containing protein 10 (FBXW10) from Homo sapiens (Human).